Here is a 143-residue protein sequence, read N- to C-terminus: Small ribosomal subunit protein uS12 (143 aa).

A compositionally biased stretch (basic residues) spans 1-20; that stretch reads MGKPRGLRTARKHRSHRRDQ. The segment at 1-26 is disordered; sequence MGKPRGLRTARKHRSHRRDQRWHDKD. Proline 62 is subject to Hydroxyproline.

This sequence belongs to the universal ribosomal protein uS12 family. As to quaternary structure, component of the 40S small ribosomal subunit.

The protein localises to the cytoplasm. Its subcellular location is the cytosol. The protein resides in the rough endoplasmic reticulum. The polypeptide is Small ribosomal subunit protein uS12 (RpS23) (Dermacentor variabilis (American dog tick)).